We begin with the raw amino-acid sequence, 330 residues long: Protein LEG1 homolog (330 aa).

The N-terminal stretch at 1-20 is a signal peptide; sequence MAFLPSWVCVLVGSFSASLA. 2 N-linked (GlcNAc...) asparagine glycosylation sites follow: Asn24 and Asn69.

This sequence belongs to the LEG1 family. Detected in saliva and in hypomineralized dental enamel (at protein level).

Its subcellular location is the secreted. Functionally, may be involved in early liver development. The chain is Protein LEG1 homolog from Homo sapiens (Human).